The primary structure comprises 205 residues: Methylthioribulose-1-phosphate dehydratase (205 aa).

Zn(2+)-binding residues include H98 and H100.

Belongs to the aldolase class II family. MtnB subfamily. The cofactor is Zn(2+).

The enzyme catalyses 5-(methylsulfanyl)-D-ribulose 1-phosphate = 5-methylsulfanyl-2,3-dioxopentyl phosphate + H2O. It functions in the pathway amino-acid biosynthesis; L-methionine biosynthesis via salvage pathway; L-methionine from S-methyl-5-thio-alpha-D-ribose 1-phosphate: step 2/6. Functionally, catalyzes the dehydration of methylthioribulose-1-phosphate (MTRu-1-P) into 2,3-diketo-5-methylthiopentyl-1-phosphate (DK-MTP-1-P). This chain is Methylthioribulose-1-phosphate dehydratase, found in Gluconacetobacter diazotrophicus (strain ATCC 49037 / DSM 5601 / CCUG 37298 / CIP 103539 / LMG 7603 / PAl5).